Consider the following 380-residue polypeptide: Cytochrome b (380 aa).

A run of 4 helical transmembrane segments spans residues 33 to 53, 77 to 98, 113 to 133, and 178 to 198; these read FGSL…FLAM, WLIR…YLHV, WNIG…GYVL, and FFAF…LHLL. The heme b site is built by His83 and His97. Heme b-binding residues include His182 and His196. His201 contributes to the a ubiquinone binding site. The next 4 helical transmembrane spans lie at 226–246, 288–308, 320–340, and 347–367; these read YKDI…ALFS, LGGV…PILH, FSQF…WIGG, and FIII…LLIP.

It belongs to the cytochrome b family. As to quaternary structure, the cytochrome bc1 complex contains 3 respiratory subunits (MT-CYB, CYC1 and UQCRFS1), 2 core proteins (UQCRC1 and UQCRC2) and probably 6 low-molecular weight proteins. It depends on heme b as a cofactor.

The protein localises to the mitochondrion inner membrane. Its function is as follows. Component of the ubiquinol-cytochrome c reductase complex (complex III or cytochrome b-c1 complex) that is part of the mitochondrial respiratory chain. The b-c1 complex mediates electron transfer from ubiquinol to cytochrome c. Contributes to the generation of a proton gradient across the mitochondrial membrane that is then used for ATP synthesis. The protein is Cytochrome b (mt-cyb) of Arapaima gigas (Arapaima).